Consider the following 1072-residue polypeptide: DNA-directed RNA polymerase subunit beta (1072 aa).

The protein belongs to the RNA polymerase beta chain family. In plastids the minimal PEP RNA polymerase catalytic core is composed of four subunits: alpha, beta, beta', and beta''. When a (nuclear-encoded) sigma factor is associated with the core the holoenzyme is formed, which can initiate transcription.

Its subcellular location is the plastid. It is found in the chloroplast. The enzyme catalyses RNA(n) + a ribonucleoside 5'-triphosphate = RNA(n+1) + diphosphate. Functionally, DNA-dependent RNA polymerase catalyzes the transcription of DNA into RNA using the four ribonucleoside triphosphates as substrates. The chain is DNA-directed RNA polymerase subunit beta from Crucihimalaya wallichii (Rock-cress).